The primary structure comprises 108 residues: ER membrane protein complex subunit 6 (108 aa).

Transmembrane regions (helical) follow at residues 21–41 (VVSF…GILG), 45–65 (YEGL…LFAL), and 86–106 (ILDG…LVYV).

This sequence belongs to the EMC6 family.

Its subcellular location is the endoplasmic reticulum membrane. The polypeptide is ER membrane protein complex subunit 6 (Schizosaccharomyces pombe (strain 972 / ATCC 24843) (Fission yeast)).